The following is a 2225-amino-acid chain: MNMSRQGIFQTVGSGLDHILSLADIEEEQMIQSVDRTAVTGASYFTSVDQSSVHTAEVGSHQIEPLKTSVDKPGSKKTQGEKFFLIHSADWLTTHALFHEVAKLDVVKLLYNEQFAVQGLLRYHTYARFGIEIQVQINPTPFQQGGLICAMVPGDQSYGSIASLTVYPHGLLNCNINNVVRIKVPFIYTRGAYHFKDPQYPVWELTIRVWSELNIGTGTSAYTSLNVLARFTDLELHGLTPLSTQMMRNEFRVSTTENVVNLSNYEDARAKMSFALDQEDWKSDPSQGGGIKITHFTTWTSIPTLAAQFPFNASDSVGQQIKVIPVDPYFFQMTNSNPDQKCITALASICQMFCFWRGDLVFDFQVFPTKYHSGRLLFCFVPGNELIDVSGITLKQATTAPCAVMDIAGVQSTLRFRVPWIPDTRYRVNRYTKSAHQKGEYTAIGKLIVYCYNRLTSPSNVASHVRVNVYLSAINLECFAPLYHAMDVTTQVGDDSGGFSTTVSTEQNVPDPQVGITTMRDLKGKANRGKMDVSGVQAPVGAITTIEDPVLAKKVPETFPELKPGESRHTSDHMSIYKFMGRSHFLCTFTFNSNNKEYTFPITLSSTSNPPHGLPSTLRWFFNLFQLYRGPLDLTIIITGATDVDGMAWFTPVGLAVDTPWVEKESALSIDYKTALGAVRFNTRRTGNIQIRLPWYSYLYAVSGALDGLGDKTDSTFGLVSIQIANYNHSDEYLSFSCYLSVTEQSEFYFPRAPLNSNAMLSTETMMSRIAAGDLESSVDDPRSEEDRRFESHIESRKPYKELRLEVGKQRLKYAQEELSNEVLPPPRKMKGLFSQAKISLFYTEEHEIMKFSWRGVTADTRALRRFGFSLAAGRSVWTLEMDAGVLTGRLVRLNDEKWTEMKDDKIVSLVEKFTSNKHWSKVNFPHGMLDLEEIAANSKDFPNMSETDLCFLLHWLNPKKINLADRMLGLSGVQEIKEQGIGLIAECRTFLDSITGSLKSMMFGFHHSVTVDIVNIVLCFVKSGILLYVIQQLNQDEHSHIIGLLRVMNYADIGCSVISCGKVFSKMLETVFNWQMDSRMMELRTQSFSNWLRDICSGITIFKSFKDAIYWLYTKLKDFYDMNYGKKKDVLNVLKDNQQRIERAIEEADNFCMLQIQDVEKFEQFQKGVDLIQKLRTVHSMAQVDSSLMIHLSPLRDCIARVHQKLKNLGSINQAMVTRCEPVVCYLYGKRGGGKSLTSIALATKICKHYGVEPEKNIYTKPVASDYWDGYSGQLVCIIDDIGQNTTDEDWSDFCQLVSGCPMRLNMASLEEKGRHFSSPFIIATSNWSNPSPKTVYVKEAIDRRLHFKIEVKPASFFQNPHNDMLNVNLAKTSDAIKDMSCVDLIMDGHNISLMDLLSSLVMTVEIRKQNMTEFMELWSQGISDDDSAVAEFFQSFPSGEPSSSKLSGFFQSVTNHKWVAVGAAVGILGVLVGGWFVYKHFSRKEEEPIPTEGVYHGVTKPKQVIKLDADPVESQSTLEIAGLVRKNLVQFGVGEKNGCVRWVMNALGVKDDWLLVPSHAYKFEKDYEMMEFYFNRGGTYYSISAGNVVIQSLDVGFQDVVLMKVPTIPKFRDITEHFIKKGDVPRALNRLATLVTTVNGTPMLISEGPLKMEEKATYVHKKNDGTTVDLTVDQAWRGKGEGLPGMCGGALISSNQSIQNAILGIHVAGGNSILVAKLVTQEMFQNIDKKIESQRIMKVEFSQCSMNVVSKTLFKKSPIHHHIDKDMINFPAAMPFSRAEIDPMAVMLSKYSLPMVEEPEGYKDVSIFFQNKIMGKSILVDDFLDLDMAITGTPGIDAINMDSSPGFPYVQEKLTKRDLIWLHENGLLLGIHPRLAQRILFNTVMMENCSDLDVVFTTCPKDELRPLDKVLESKTRAIDACPLDYTILCRMYWGPAISYFHLNPGFHTGVAIGIDPDKQWDELFKTMIRFGDVGLDLDFSAFDASLSPFMIREAGRIMSEISGTPSHFGTALINTIIYSKHLLYNCCYHVYGSMPSGSPCTALLNSIINNINLYYVFAKIFRKSPVFFSQAVRILCYGDDVLVVFSRDIQIDNLDQIGQKIVHEFKELGMTATSADKTVPQLKPVSELTFLKRSFNLVEDRIRPAISEKTIWSLVAWQRSNAEFEQNLENAQWFAFMHGFEFYQKFYYFVQSCLEKEMIEYRLKSYDWWRMRFYDQCFVCDLS.

Short sequence motifs ((L)YPX(n)L motif) lie at residues 167–171 (YPHGL) and 200–205 (YPVWEL). The segment at 766–836 (MMSRIAAGDL…PRKMKGLFSQ (71 aa)) is involved in P1-2A pentamerization. Residues 1011-1031 (TVDIVNIVLCFVKSGILLYVI) traverse the membrane as a helical segment. The interval 1043-1070 (IGLLRVMNYADIGCSVISCGKVFSKMLE) is membrane-penetrating ability. The stretch at 1127 to 1152 (KKKDVLNVLKDNQQRIERAIEEADNF) forms a coiled coil. One can recognise an SF3 helicase domain in the interval 1204 to 1366 (HQKLKNLGSI…SFFQNPHNDM (163 aa)). 1230–1237 (GKRGGGKS) is a binding site for ATP. A helical transmembrane segment spans residues 1460–1480 (WVAVGAAVGILGVLVGGWFVY). Tyrosine 1497 bears the O-(5'-phospho-RNA)-tyrosine mark. The 215-residue stretch at 1512–1726 (DPVESQSTLE…VAKLVTQEMF (215 aa)) folds into the Peptidase C3 domain. Catalysis depends on for protease 3C activity residues histidine 1561, aspartate 1601, and cysteine 1689. The region spanning 1974-2095 (DVGLDLDFSA…VFSRDIQIDN (122 aa)) is the RdRp catalytic domain.

The protein belongs to the picornaviridae polyprotein family. Homodimer. Homomultimer; probably interacts with membranes in a multimeric form. Seems to assemble into amyloid-like fibers. In terms of assembly, homodimer. Monomer. Interacts with protein 3CD. As to quaternary structure, interacts with host ACBD3. Interacts with protein 3AB. In terms of assembly, interacts with human MAVS. As to quaternary structure, homodimer; disulfide-linked. Homopentamer. Homooligomer. In terms of assembly, interacts with capsid protein VP2. Interacts with capsid protein VP3. As to quaternary structure, interacts with capsid protein VP1. Interacts with capsid protein VP3. Interacts with capsid protein VP1. Interacts with capsid protein VP2. Post-translationally, specific enzymatic cleavages by viral protease in vivo yield a variety of precursors and mature proteins. Polyprotein processing intermediates are produced, such as P1-2A which is a functional precursor of the structural proteins, VP0 which is a VP4-VP2 precursor, VP1-2A precursor, 3ABC precursor which is a stable and catalytically active precursor of 3A, 3B and 3C proteins, 3AB and 3CD precursors. The assembly signal 2A is removed from VP1-2A by a host protease, possibly host Cathepsin L. This cleavage occurs over a region of 3 amino-acids probably generating VP1 proteins with heterogeneous C-termini. During virion maturation, immature virions are rendered infectious following cleavage of VP0 into VP4 and VP2. This maturation seems to be an autocatalytic event triggered by the presence of RNA in the capsid and is followed by a conformational change of the particle. In terms of processing, the assembly signal 2A is removed from VP1-2A by a host protease, possibly host Cathepsin L in naked virions. This cleavage does not occur in enveloped virions. This cleavage occurs over a region of 3 amino-acids probably generating VP1 proteins with heterogeneous C-termini. Post-translationally, VPg is uridylylated prior to priming replication into VPg-pUpU. Unlike other picornaviruses, does not seem to be myristoylated.

It localises to the virion. The protein localises to the host endosome. The protein resides in the host multivesicular body. Its subcellular location is the host membrane. It is found in the host mitochondrion outer membrane. It localises to the host cytoplasm. The protein localises to the host cytoplasmic vesicle membrane. The enzyme catalyses RNA(n) + a ribonucleoside 5'-triphosphate = RNA(n+1) + diphosphate. It catalyses the reaction a ribonucleoside 5'-triphosphate + H2O = a ribonucleoside 5'-diphosphate + phosphate + H(+). The catalysed reaction is Selective cleavage of Gln-|-Gly bond in the poliovirus polyprotein. In other picornavirus reactions Glu may be substituted for Gln, and Ser or Thr for Gly.. Its function is as follows. Capsid proteins VP1, VP2, and VP3 form a closed capsid enclosing the viral positive strand RNA genome. All these proteins contain a beta-sheet structure called beta-barrel jelly roll. Together they form an icosahedral capsid (T=3) composed of 60 copies of each VP1, VP2, and VP3, with a diameter of approximately 300 Angstroms. VP1 is situated at the 12 fivefold axes, whereas VP2 and VP3 are located at the quasi-sixfold axes. The naked capsid interacts with the host receptor HAVCR1 to provide virion attachment to and probably entry into the target cell. In terms of biological role, VP0 precursor is a component of the immature procapsids. Functionally, plays a role in the assembly of the 12 pentamers into an icosahedral structure. Has not been detected in mature virions, supposedly owing to its small size. Precursor component of immature procapsids that corresponds to an extended form of the structural protein VP1. After maturation, possibly by the host Cathepsin L, the assembly signal 2A is cleaved to give rise to the mature VP1 protein. Its function is as follows. Functions as a viroporin. Affects membrane integrity and causes an increase in membrane permeability. Involved in host intracellular membrane rearrangements probably to give rise to the viral factories. Does not disrupt calcium homeostasis or glycoprotein trafficking. Antagonizes the innate immune response of the host by suppressing IFN-beta synthesis, which it achieves by interfering with the RIG-I/IFIH1 pathway. In terms of biological role, affects membrane integrity and causes an increase in membrane permeability. Functionally, associates with and induces structural rearrangements of intracellular membranes. Displays RNA-binding activity. The precursor 3ABC is targeted to the mitochondrial membrane where protease 3C activity cleaves and inhibits the host antiviral protein MAVS, thereby disrupting activation of IRF3 through the IFIH1/MDA5 pathway. In vivo, the protease activity of 3ABC precursor is more efficient in cleaving the 2BC precursor than that of protein 3C. The 3ABC precursor may therefore play a role in the proteolytic processing of the polyprotein. Possible viroporin. Its function is as follows. Interacts with the 3CD precursor and with RNA structures found at both the 5'- and 3'-termini of the viral genome. Since the 3AB precursor contains the hydrophobic domain 3A, it probably anchors the whole viral replicase complex to intracellular membranes on which viral RNA synthesis occurs. In terms of biological role, may serve as membrane anchor to the 3AB and 3ABC precursors via its hydrophobic domain. May interact with RNA. Functionally, acts as a primer for viral RNA replication and remains covalently bound to viral genomic RNA. VPg is uridylylated prior to priming replication into VPg-pUpU. The VPg-pUpU is then used as primer on the genomic RNA poly(A) by the RNA-dependent RNA polymerase to replicate the viral genome. Cysteine protease that generates mature viral proteins from the precursor polyprotein. In addition to its proteolytic activity, it binds to viral RNA, and thus influences viral genome replication. RNA and substrate bind cooperatively to the protease. Cleaves IKBKG/NEMO to impair innate immune signaling. Cleaves host PABPC1 which may participate in the switch of viral translation to RNA synthesis. Its function is as follows. Interacts with the 3AB precursor and with RNA structures found at both the 5'- and 3'-termini of the viral genome. Disrupts TLR3 signaling by degrading the host adapter protein TICAM1/TRIF. In terms of biological role, RNA-directed RNA polymerase 3D-POL replicates genomic and antigenomic RNA by recognizing replications specific signals. The sequence is that of Genome polyprotein from Homo sapiens (Human).